Consider the following 447-residue polypeptide: UPF0210 protein LCK_00974 (447 aa).

This sequence belongs to the UPF0210 family. In terms of assembly, homodimer.

This chain is UPF0210 protein LCK_00974, found in Leuconostoc citreum (strain KM20).